A 603-amino-acid polypeptide reads, in one-letter code: Insulin-like growth factor-binding protein complex acid labile subunit (603 aa).

The signal sequence occupies residues 1–23 (MALRTGGPALVVLLAFWVALGPC). Residues 32 to 74 (ASADAEGPQCPVACTCSHDDYTDELSVFCSSKNLTHLPDDIPV) form the LRRNT domain. 2 cysteine pairs are disulfide-bonded: cysteine 41–cysteine 47 and cysteine 45–cysteine 60. Residues asparagine 64, asparagine 85, and asparagine 96 are each glycosylated (N-linked (GlcNAc...) asparagine). 19 LRR repeats span residues 75–96 (STRA…AFQN), 99–120 (SLDF…ALLG), 123–144 (NLYY…LFTH), 147–168 (SLAS…LFQG), 171–192 (HLWD…VFQG), 195–216 (NLHE…LFCG), 219–240 (ELRE…VFVH), 243–264 (RLQK…AFLG), 267–288 (ALRW…TFPG), 291–312 (GLHV…TFKD), 315–336 (FLEE…TFEG), 339–360 (QLEV…AFSG), 363–384 (NVAV…VFQG), 387–408 (KLHS…TFAG), 411–432 (GLRR…SLAG), 435–456 (ELLE…LFQG), 459–480 (HLEY…VLGP), 483–504 (RAFW…LFSS), and 507–528 (RVRY…PGLE). N-linked (GlcNAc...) asparagine glycosylation occurs at asparagine 368. N-linked (GlcNAc...) asparagine glycosylation is present at asparagine 515. The 69-residue stretch at 535 to 603 (NPWDCSCPLK…DVSETHFVHC (69 aa)) folds into the LRRCT domain. 3 disulfide bridges follow: cysteine 539/cysteine 581, cysteine 541/cysteine 603, and cysteine 565/cysteine 570. N-linked (GlcNAc...) asparagine glycans are attached at residues asparagine 578 and asparagine 586.

In terms of assembly, forms a ternary complex with IGF1 and IGFBP3. Brain, kidney, lung, heart, spleen, muscle and liver.

The protein localises to the secreted. It localises to the extracellular space. May have an important role in regulating the access of circulating IGFs to the tissues. The chain is Insulin-like growth factor-binding protein complex acid labile subunit (Igfals) from Rattus norvegicus (Rat).